We begin with the raw amino-acid sequence, 443 residues long: Thymidine phosphorylase (443 aa).

The protein belongs to the thymidine/pyrimidine-nucleoside phosphorylase family. In terms of assembly, homodimer.

It catalyses the reaction thymidine + phosphate = 2-deoxy-alpha-D-ribose 1-phosphate + thymine. It functions in the pathway pyrimidine metabolism; dTMP biosynthesis via salvage pathway; dTMP from thymine: step 1/2. In terms of biological role, the enzymes which catalyze the reversible phosphorolysis of pyrimidine nucleosides are involved in the degradation of these compounds and in their utilization as carbon and energy sources, or in the rescue of pyrimidine bases for nucleotide synthesis. In Shewanella piezotolerans (strain WP3 / JCM 13877), this protein is Thymidine phosphorylase.